The chain runs to 112 residues: uncharacterized protein (112 aa).

Residues 6–60 (LRQLRKAHKLTMEQLAEKIGIAKSSYGGYEAESKKPPLDKLVILARLYDVSVDYI) enclose the HTH cro/C1-type domain. A DNA-binding region (H-T-H motif) is located at residues 17 to 36 (MEQLAEKIGIAKSSYGGYEA).

This is an uncharacterized protein from Bacillus subtilis (strain 168).